We begin with the raw amino-acid sequence, 259 residues long: MNTRATHKTEGFVLKTLSYSDSDLIVTFYTRNFGKLTAIARGARKSRKRFVNVLEPFCCSSLLFSRKQRDQLAWLESCQVINEFPEIRKSLDRTLLASYLIDLVDHFSIEEKPGRELFELLRSFLLLIEEGDTSERLLRFFEIRHLKLTGYAPALDCCMICKAPLNPQQRYVFNIAQGGLHCRSCYTTPAAPDVLPISVGTIKTLLLGREIETEKMKRILFSGQTARESKSLLSLFIGHILGKELKSLKVLDEIQRMGL.

This sequence belongs to the RecO family.

Its function is as follows. Involved in DNA repair and RecF pathway recombination. This is DNA repair protein RecO from Syntrophus aciditrophicus (strain SB).